The primary structure comprises 131 residues: Small ribosomal subunit protein uS12 (131 aa).

Position 89 is a 3-methylthioaspartic acid (Asp89).

It belongs to the universal ribosomal protein uS12 family. In terms of assembly, part of the 30S ribosomal subunit. Contacts proteins S8 and S17. May interact with IF1 in the 30S initiation complex.

Functionally, with S4 and S5 plays an important role in translational accuracy. In terms of biological role, interacts with and stabilizes bases of the 16S rRNA that are involved in tRNA selection in the A site and with the mRNA backbone. Located at the interface of the 30S and 50S subunits, it traverses the body of the 30S subunit contacting proteins on the other side and probably holding the rRNA structure together. The combined cluster of proteins S8, S12 and S17 appears to hold together the shoulder and platform of the 30S subunit. This chain is Small ribosomal subunit protein uS12, found in Campylobacter concisus (strain 13826).